Reading from the N-terminus, the 150-residue chain is Large ribosomal subunit protein bL9 (150 aa).

The protein belongs to the bacterial ribosomal protein bL9 family.

Its function is as follows. Binds to the 23S rRNA. The chain is Large ribosomal subunit protein bL9 from Streptococcus equi subsp. equi (strain 4047).